An 849-amino-acid polypeptide reads, in one-letter code: Villin-1 (849 aa).

Gelsolin-like repeat units follow at residues 30 to 107 (IEKS…DKFL), 147 to 213 (RVTE…EDGK), 262 to 335 (VPVE…TVEF), 405 to 475 (QEQL…PEMF), and 527 to 566 (AIQV…DHNL). Positions 739-849 (ETPERSLRKS…AVATGTPRRR (111 aa)) are disordered. 2 stretches are compositionally biased toward low complexity: residues 747-782 (KSSS…SAST) and 791-823 (PAAL…STPS).

Belongs to the villin/gelsolin family. Expressed in roots, young leaves, and inflorescences, mostly in the vasculature of roots, leaves, and filaments of the anthers. Also detected in guard cells.

The protein localises to the cytoplasm. It localises to the cytoskeleton. Functionally, ca(2+)-independent actin-binding protein. Binds actin microfilaments (MFs). Involved in actin filament bundling, severing and capping. Caps the barbed end of actin filaments and protects them from disassembly. Promotes VLN3-mediated MF severing. The protein is Villin-1 of Oryza sativa subsp. japonica (Rice).